Here is a 614-residue protein sequence, read N- to C-terminus: Pentatricopeptide repeat-containing protein At1g63080, mitochondrial (614 aa).

A mitochondrion-targeting transit peptide spans 1–7 (MSLAKRF). PPR repeat units follow at residues 64–98 (SIVE…GVSH), 99–133 (NLYT…GYGP), 134–168 (SIVT…GYQP), 169–203 (DTVT…GCQP), 204–238 (DLVT…KIEA), 239–273 (DVVI…GIRP), 274–308 (DVFT…KINP), 309–343 (NVVT…SIDP), 344–378 (NIVT…DCLP), 379–413 (DVVT…GLVG), 414–448 (NTVT…GVHP), 449–483 (NIMT…KMEP), 484–518 (DIYT…GVKP), 519–553 (DVIA…GPLP), and 554–588 (DSGT…RFAG).

Belongs to the PPR family. P subfamily.

It is found in the mitochondrion. In Arabidopsis thaliana (Mouse-ear cress), this protein is Pentatricopeptide repeat-containing protein At1g63080, mitochondrial.